Reading from the N-terminus, the 349-residue chain is Isopentenyl-diphosphate delta-isomerase (349 aa).

Substrate is bound at residue 9–10; sequence RK. FMN is bound by residues 65-67, Ser-95, and Asn-124; that span reads AMT. Residue 95–97 participates in substrate binding; the sequence is STH. Gln-154 is a binding site for substrate. Glu-155 contacts Mg(2+). Residues Lys-186, Ser-211, Thr-216, 262-264, and 283-284 each bind FMN; these read GVR and SR.

Belongs to the IPP isomerase type 2 family. Homooctamer. Dimer of tetramers. FMN is required as a cofactor. It depends on NADPH as a cofactor. The cofactor is Mg(2+).

It localises to the cytoplasm. The catalysed reaction is isopentenyl diphosphate = dimethylallyl diphosphate. In terms of biological role, involved in the biosynthesis of isoprenoids. Catalyzes the 1,3-allylic rearrangement of the homoallylic substrate isopentenyl (IPP) to its allylic isomer, dimethylallyl diphosphate (DMAPP). The polypeptide is Isopentenyl-diphosphate delta-isomerase (Staphylococcus haemolyticus (strain JCSC1435)).